A 906-amino-acid chain; its full sequence is Protein translocase subunit SecA (906 aa).

Residues Gln89, 107 to 111 (GEGKT), and Asp502 contribute to the ATP site. Positions 885, 887, 896, and 897 each coordinate Zn(2+).

Belongs to the SecA family. As to quaternary structure, monomer and homodimer. Part of the essential Sec protein translocation apparatus which comprises SecA, SecYEG and auxiliary proteins SecDF-YajC and YidC. Zn(2+) serves as cofactor.

Its subcellular location is the cell inner membrane. It is found in the cytoplasm. The enzyme catalyses ATP + H2O + cellular proteinSide 1 = ADP + phosphate + cellular proteinSide 2.. Functionally, part of the Sec protein translocase complex. Interacts with the SecYEG preprotein conducting channel. Has a central role in coupling the hydrolysis of ATP to the transfer of proteins into and across the cell membrane, serving both as a receptor for the preprotein-SecB complex and as an ATP-driven molecular motor driving the stepwise translocation of polypeptide chains across the membrane. The polypeptide is Protein translocase subunit SecA (Rhizobium rhizogenes (strain K84 / ATCC BAA-868) (Agrobacterium radiobacter)).